Consider the following 286-residue polypeptide: MTTDHAGKKVDVVVVGNVDGEHVGVEQARHDLHEEAAAAAAADHHATRGLAIGFLIREVMVEGLASFLVVFWSCVAALMQEMYGTLTFPMVCLVVAMTVAFVLSWLGPAHFNPAVTITFAAYRRFPVWPKLPLYVAAQLAGSLLACLSVNAVMRPRHDHFYGTAPVVVHGTRLPFLMEFLASAVLMIVIATVATDGTAGKTVGGIAIGAAVGGLGLVIGPVSGGSMNPARTLGPAIVLGRYDGVWIYVVAPVAGMLVGALCNRAVRLSHRIVAFLCGTSVGIAGSP.

A run of 2 helical transmembrane segments spans residues 59–79 (VMVE…AALM) and 86–106 (LTFP…LSWL). The short motif at 112 to 114 (NPA) is the NPA 1 element. 3 helical membrane passes run 133 to 153 (LYVA…NAVM), 173 to 193 (LPFL…ATVA), and 201 to 221 (TVGG…IGPV). The NPA 2 motif lies at 227-229 (NPA). The helical transmembrane segment at 241–261 (YDGVWIYVVAPVAGMLVGALC) threads the bilayer.

Belongs to the MIP/aquaporin (TC 1.A.8) family. NIP (TC 1.A.8.12) subfamily. In terms of tissue distribution, expressed in leaves and at lower levels in roots.

The protein localises to the membrane. Its function is as follows. Aquaporins facilitate the transport of water and small neutral solutes across cell membranes. The chain is Aquaporin NIP4-1 (NIP4-1) from Oryza sativa subsp. japonica (Rice).